We begin with the raw amino-acid sequence, 662 residues long: DNA ligase (662 aa).

NAD(+) contacts are provided by residues D32 to D36, S81 to L82, and E112. K114 serves as the catalytic N6-AMP-lysine intermediate. NAD(+)-binding residues include R135, E170, K286, and K310. The Zn(2+) site is built by C402, C405, C420, and C425. The region spanning P583–E662 is the BRCT domain.

The protein belongs to the NAD-dependent DNA ligase family. LigA subfamily. Mg(2+) serves as cofactor. It depends on Mn(2+) as a cofactor.

It carries out the reaction NAD(+) + (deoxyribonucleotide)n-3'-hydroxyl + 5'-phospho-(deoxyribonucleotide)m = (deoxyribonucleotide)n+m + AMP + beta-nicotinamide D-nucleotide.. Functionally, DNA ligase that catalyzes the formation of phosphodiester linkages between 5'-phosphoryl and 3'-hydroxyl groups in double-stranded DNA using NAD as a coenzyme and as the energy source for the reaction. It is essential for DNA replication and repair of damaged DNA. The protein is DNA ligase of Solibacter usitatus (strain Ellin6076).